A 470-amino-acid polypeptide reads, in one-letter code: Putative multidrug resistance protein MdtD (470 aa).

At 1–11 (MTELPDNTRWQ) the chain is on the periplasmic side. Residues 12–32 (LWIVALGFFMQSLDTTIVNTA) form a helical membrane-spanning segment. Over 33–48 (LPSMAKSLGESPLHMH) the chain is Cytoplasmic. Residues 49–69 (MVVVSYVLTVAVMLPASGWLA) form a helical membrane-spanning segment. Over 70 to 76 (DKIGVRN) the chain is Periplasmic. A helical membrane pass occupies residues 77-97 (IFFAAIVLFTLGSLFCALSGT). Over 98–101 (LNQL) the chain is Cytoplasmic. The helical transmembrane segment at 102–124 (VLARVLQGVGGAMMVPVGRLTVM) threads the bilayer. Topologically, residues 125 to 137 (KIVPRAQYMAAMT) are periplasmic. The chain crosses the membrane as a helical span at residues 138-158 (FVTLPGQIGPLLGPALGGVLV). Over 159 to 164 (EYASWH) the chain is Cytoplasmic. A helical transmembrane segment spans residues 165-185 (WIFLINIPVGIVGAMATFMLM). Residues 186 to 196 (PNYTIETRRFD) lie on the Periplasmic side of the membrane. The helical transmembrane segment at 197-217 (LPGFLLLAIGMAVLTLALDGS) threads the bilayer. Topologically, residues 218–221 (KSMG) are cytoplasmic. The chain crosses the membrane as a helical span at residues 222 to 242 (ISPWTLAGLAAGGAAAILLYL). At 243–262 (LHAKKNSGALFSLRLFRTPT) the chain is on the periplasmic side. Residues 263 to 283 (FSLGLLGSFAGRIGSGMLPFM) traverse the membrane as a helical segment. The Cytoplasmic portion of the chain corresponds to 284–285 (TP). Residues 286 to 306 (VFLQIGLGFSPFHAGLMMIPM) form a helical membrane-spanning segment. At 307 to 341 (VLGSMGMKRIVVQIVNRFGYRRVLVATTLGLALVS) the chain is on the periplasmic side. Residues 342–362 (LLFMSVALLGWYYLLPLVLLL) form a helical membrane-spanning segment. At 363–395 (QGMVNSARFSSMNTLTLKDLPDTLASSGNSLLS) the chain is on the cytoplasmic side. Residues 396 to 416 (MIMQLSMSIGVTIAGMLLGMF) form a helical membrane-spanning segment. At 417 to 430 (GQQHIGIDSSATHH) the chain is on the periplasmic side. The chain crosses the membrane as a helical span at residues 431-451 (VFMYTWLCMAVIIALPAIIFA). Topologically, residues 452–470 (RVPNDTQQNMVISRRKRSL) are cytoplasmic.

Belongs to the major facilitator superfamily. TCR/Tet family.

The protein resides in the cell inner membrane. The protein is Putative multidrug resistance protein MdtD of Salmonella heidelberg (strain SL476).